The primary structure comprises 216 residues: Orotate phosphoribosyltransferase (216 aa).

Residues Arg-100, Lys-104, His-106, and Glu-126 to Ser-134 each bind 5-phospho-alpha-D-ribose 1-diphosphate. An orotate-binding site is contributed by Ser-130.

Belongs to the purine/pyrimidine phosphoribosyltransferase family. PyrE subfamily. As to quaternary structure, homodimer. Interacts with BrxC. Requires Mg(2+) as cofactor.

The catalysed reaction is orotidine 5'-phosphate + diphosphate = orotate + 5-phospho-alpha-D-ribose 1-diphosphate. The protein operates within pyrimidine metabolism; UMP biosynthesis via de novo pathway; UMP from orotate: step 1/2. In terms of biological role, catalyzes the transfer of a ribosyl phosphate group from 5-phosphoribose 1-diphosphate to orotate, leading to the formation of orotidine monophosphate (OMP). The sequence is that of Orotate phosphoribosyltransferase from Bacillus subtilis (strain 168).